We begin with the raw amino-acid sequence, 219 residues long: Ras-related protein Rab-3B (219 aa).

Residue A2 is modified to N-acetylalanine. GTP-binding residues include S31, S32, V33, G34, K35, T36, S37, P49, and S53. T36 contributes to the Mg(2+) binding site. Residues 45–58 carry the Switch 1 motif; sequence DTFTPAFVSTVGID. Mg(2+)-binding residues include T54 and D77. The Switch 2 signature appears at 78-96; it reads TAGQERYRTITTAYYRGAM. G80 contacts GTP. Residue T86 is modified to Phosphothreonine. Positions 135, 136, 138, 166, and 167 each coordinate GTP. Phosphoserine occurs at positions 188 and 190. Residues C217 and C219 are each lipidated (S-geranylgeranyl cysteine). Position 219 is a cysteine methyl ester (C219).

The protein belongs to the small GTPase superfamily. Rab family. Interacts with RIMS1, RIMS2, RPH3A and RPH3AL. The GTP-bound form interacts with GAS8/DRC4 (via coiled-coil domains). Interacts with GDI2, CHM and CHML; phosphorylation at Thr-86 disrupts these interactions. Interacts with MADD (via uDENN domain); the GTP-bound form is preferred for interaction. It depends on Mg(2+) as a cofactor. Post-translationally, phosphorylation of Thr-86 in the switch II region by LRRK2 prevents the association of RAB regulatory proteins, including CHM, CHML and RAB GDP dissociation inhibitor GDI2.

The protein resides in the cell membrane. It localises to the golgi apparatus. It carries out the reaction GTP + H2O = GDP + phosphate + H(+). Its activity is regulated as follows. Regulated by guanine nucleotide exchange factors (GEFs) which promote the exchange of bound GDP for free GTP. Regulated by GTPase activating proteins (GAPs) which increase the GTP hydrolysis activity. Inhibited by GDP dissociation inhibitors (GDIs) which prevent Rab-GDP dissociation. Its function is as follows. The small GTPases Rab are key regulators of intracellular membrane trafficking, from the formation of transport vesicles to their fusion with membranes. Rabs cycle between an inactive GDP-bound form and an active GTP-bound form that is able to recruit to membranes different sets of downstream effectors directly responsible for vesicle formation, movement, tethering and fusion. The chain is Ras-related protein Rab-3B (RAB3B) from Mesocricetus auratus (Golden hamster).